The primary structure comprises 420 residues: RING finger protein 39 (420 aa).

The RING-type zinc-finger motif lies at 88-135 (CPLCGGSFEDPVLLACEHSFCRACLARRWGTPPATDTEASPTACPCCG). Disordered stretches follow at residues 166–186 (PGARAGRRRGGRIPTMGCLDP) and 246–265 (DRRSVQLAPPGTPAPPDGPK). Positions 210-420 (DDLPEDYPVV…APLRIVPAES (211 aa)) constitute a B30.2/SPRY domain.

It is found in the cytoplasm. The catalysed reaction is S-ubiquitinyl-[E2 ubiquitin-conjugating enzyme]-L-cysteine + [acceptor protein]-L-lysine = [E2 ubiquitin-conjugating enzyme]-L-cysteine + N(6)-ubiquitinyl-[acceptor protein]-L-lysine.. Its pathway is protein modification; protein ubiquitination. In terms of biological role, plays an inhibitory role in anti-RNA viral innate immunity by targeting the adapter DDX3X and promoting its 'Lys-48'-linked polyubiquitination. Alternatively, enhances the cGAS-STING pathway activation by promoting 'Lys-63'-linked ubiquitination of STING1, facilitating the STING1-TBK1 complex formation and STING1 activation. This is RING finger protein 39 (RNF39) from Macaca mulatta (Rhesus macaque).